The primary structure comprises 388 residues: uncharacterized protein (388 aa).

It belongs to the glycosyltransferase 28 family.

This is an uncharacterized protein from Methanosarcina acetivorans (strain ATCC 35395 / DSM 2834 / JCM 12185 / C2A).